We begin with the raw amino-acid sequence, 244 residues long: Multiple organellar RNA editing factor 3, mitochondrial (244 aa).

The transit peptide at Met-1–Lys-62 directs the protein to the mitochondrion. 2 disordered regions span residues Thr-59–Pro-82 and Tyr-196–Ala-244. Residues Arg-60 to Asn-80 are compositionally biased toward polar residues. Positions Pro-210–Pro-226 are enriched in basic and acidic residues.

This sequence belongs to the MORF family. As to quaternary structure, heterodimer with MORF1. Homodimer and heterodimers with MORF8/RIP1, MORF4/RIP4 and MORF5/RIP5.

The protein resides in the mitochondrion. Functionally, involved in organellar RNA editing. Required for the processing of RNA editing sites in mitochondria. The sequence is that of Multiple organellar RNA editing factor 3, mitochondrial from Arabidopsis thaliana (Mouse-ear cress).